The following is a 601-amino-acid chain: Alpha-terpineol synthase, chloroplastic (601 aa).

Residues 1–47 constitute a chloroplast transit peptide; it reads MSTISIHHVGILRNPLHSKSKRASINKPWSLSLPRSSSASRLVEPCR. Mn(2+) is bound by residues Asp357 and Asp361. The DDXXD motif motif lies at 357 to 361; sequence DDVYD. Homodimerization regions lie at residues 363–369 and 435–471; these read YGTLDEL and EAEW…ELSL. Mn(2+) is bound by residues Asp499 and Glu507.

Belongs to the terpene synthase family. In terms of assembly, homodimer. It depends on Mn(2+) as a cofactor. The cofactor is Mg(2+).

It localises to the plastid. The protein resides in the chloroplast. The enzyme catalyses (2E)-geranyl diphosphate + H2O = (S)-alpha-terpineol + diphosphate. It catalyses the reaction (2E)-geranyl diphosphate + H2O = (R)-alpha-terpineol + diphosphate. The protein operates within secondary metabolite biosynthesis; terpenoid biosynthesis. Involved in the biosynthesis of phenolic monoterpenes natural products. Monoterpene synthase which catalyzes the conversion of geranyl diphosphate (GPP) to alpha-terpineol (isomer is not determined). In Thymus caespititius (Cretan thyme), this protein is Alpha-terpineol synthase, chloroplastic.